Consider the following 165-residue polypeptide: UPF0254 protein MmarC6_1720 (165 aa).

The protein belongs to the UPF0254 family.

This is UPF0254 protein MmarC6_1720 from Methanococcus maripaludis (strain C6 / ATCC BAA-1332).